The primary structure comprises 182 residues: Vacuolar protein sorting-associated protein 29 (182 aa).

K50 carries the post-translational modification N6-acetyllysine.

Belongs to the VPS29 family. Component of the commander complex consisting of the CCC subcomplex and the retriever subcomplex. Component of the heterotrimeric retriever complex formed by VPS26C, VPS29 and VPS35L; within the complex interacts with VPS35L. Component of the heterotrimeric retromer cargo-selective complex (CSC), also described as vacuolar protein sorting subcomplex (VPS), formed by VPS26 (VPS26A or VPS26B), VPS29 and VPS35. The CSC has a highly elongated structure with VPS26 and VPS29 binding independently at opposite distal ends of VPS35 as central platform. The CSC is believed to associate with variable sorting nexins to form functionally distinct retromer complex variants. The originally described retromer complex (also called SNX-BAR retromer) is a pentamer containing the CSC and a heterodimeric membrane-deforming subcomplex formed between SNX1 or SNX2 and SNX5 or SNX6 (also called SNX-BAR subcomplex); the respective CSC and SNX-BAR subcomplexes associate with low affinity. The CSC associates with SNX3 to form a SNX3-retromer complex. The CSC associates with SNX27, the WASH complex and the SNX-BAR subcomplex to form the SNX27-retromer complex. Interacts with VPS26A, VPS35, SNX1, SNX2, SNX3, SNX27, WASHC5. Interacts with TBC1D5; this interaction is blocked by VPS35L in the retriever complex. Interacts with SNX17; the interaction is indirect; SNX17 (via its C-terminus) interacts with the retriever complex (via VPS26C and VPS35L). Interacts with VPS26B and ANKRD27.

The protein localises to the cytoplasm. It localises to the membrane. It is found in the endosome membrane. Its subcellular location is the early endosome. The protein resides in the late endosome. Functionally, component of the commander complex that is essential for endosomal recycling of transmembrane cargos; the commander complex is composed of the CCC subcomplex and the retriever subcomplex. Component of the retriever complex, which is a heterotrimeric complex related to retromer cargo-selective complex (CSC) and essential for retromer-independent retrieval and recycling of numerous cargos such as integrin alpha-5/beta-1 (ITGA5:ITGB1). Component of the retromer cargo-selective complex (CSC). The CSC is believed to be the core functional component of retromer or respective retromer complex variants acting to prevent missorting of selected transmembrane cargo proteins into the lysosomal degradation pathway. The recruitment of the CSC to the endosomal membrane involves RAB7A and SNX3. The SNX-BAR retromer mediates retrograde transport of cargo proteins from endosomes to the trans-Golgi network (TGN) and is involved in endosome-to-plasma membrane transport for cargo protein recycling. The SNX3-retromer mediates the retrograde endosome-to-TGN transport of WLS distinct from the SNX-BAR retromer pathway. The SNX27-retromer is believed to be involved in endosome-to-plasma membrane trafficking and recycling of a broad spectrum of cargo proteins. The CSC seems to act as recruitment hub for other proteins, such as the WASH complex and TBC1D5. Required to regulate transcytosis of the polymeric immunoglobulin receptor (pIgR-pIgA). In the endosomes, retriever complex drives the retrieval and recycling of NxxY-motif-containing cargo proteins by coupling to SNX17, a cargo essential for the homeostatic maintenance of numerous cell surface proteins associated with processes that include cell migration, cell adhesion, nutrient supply and cell signaling. The recruitment of the retriever complex to the endosomal membrane involves CCC and WASH complexes. Involved in GLUT1 endosome-to-plasma membrane trafficking; the function is dependent of association with ANKRD27. The sequence is that of Vacuolar protein sorting-associated protein 29 from Rattus norvegicus (Rat).